The following is a 452-amino-acid chain: Glycine receptor subunit alpha-2 (452 aa).

Positions 1–27 (MYRQLVNILTALFAFFLGTNHFREAFC) are cleaved as a signal peptide. At 28–256 (KDHDSRSGKH…KFHLERQMGY (229 aa)) the chain is on the extracellular side. Asn-72 carries an N-linked (GlcNAc...) asparagine glycan. Arg-99 lines the glycine pocket. Residue Arg-99 coordinates strychnine. A glycan (N-linked (GlcNAc...) asparagine) is linked at Asn-103. Residue Ser-163 participates in glycine binding. An intrachain disulfide couples Cys-172 to Cys-186. Zn(2+)-binding residues include Glu-226 and Glu-228. A disulfide bridge connects residues Cys-232 and Cys-243. Thr-238 contributes to the glycine binding site. His-249 is a binding site for Zn(2+). The helical transmembrane segment at 257 to 278 (YLIQMYIPSLLIVILSWVSFWI) threads the bilayer. Residues 279–283 (NMDAA) lie on the Cytoplasmic side of the membrane. A helical membrane pass occupies residues 284–304 (PARVALGITTVLTMTTQSSGS). The Extracellular portion of the chain corresponds to 305–315 (RASLPKVSYVK). A helical membrane pass occupies residues 316–336 (AIDIWMAVCLLFVFAALLEYA). Residues 337–420 (AVNFVSRQHK…FVDRAKRIDT (84 aa)) are Cytoplasmic-facing. Residues 421–441 (ISRAAFPLAFLIFNIFYWITY) form a helical membrane-spanning segment. Residues 442-452 (KIIRHEDVHKK) are Extracellular-facing.

Belongs to the ligand-gated ion channel (TC 1.A.9) family. Glycine receptor (TC 1.A.9.3) subfamily. GLRA2 sub-subfamily. In terms of assembly, interacts with GLRB. Heteropentamer composed of GLRA2 and GLRB; functional GLRB-GLRA2 heteropentamers contain four GLRA2 subunits and one GLRB subunit, although alternative subunit composition cannot be excluded. Homopentamer (in vitro). Both homopentamers and heteropentamers form functional ion channels, but their characteristics are subtly different. As to expression, detected in the retina inner plexiform layer (at protein level). Detected in neonate retina. Detected in brain. Detected in spinal cord, with higher levels in the dorsal horn.

The protein resides in the postsynaptic cell membrane. It localises to the synapse. It is found in the cell membrane. The protein localises to the cell projection. The enzyme catalyses chloride(in) = chloride(out). Channel opening is triggered by extracellular glycine. Channel opening is also triggered by taurine and beta-alanine. Inhibited by strychnine. Inhibited by picrotoxin. Subunit of heteromeric glycine-gated chloride channels. Plays a role in synaptic plasticity. Contributes to the generation of inhibitory postsynaptic currents, and is involved in the down-regulation of neuronal excitability. Plays a role in cellular responses to ethanol. This is Glycine receptor subunit alpha-2 from Mus musculus (Mouse).